We begin with the raw amino-acid sequence, 660 residues long: UvrABC system protein B (660 aa).

The Helicase ATP-binding domain occupies 27 to 414; sequence NGVNEGKRHQ…TDEMVQQIIR (388 aa). An ATP-binding site is contributed by 40-47; it reads GATGTGKT. The Beta-hairpin motif lies at 93-116; sequence YYDYYQPEAYVPSTDTFIEKDASI. One can recognise a Helicase C-terminal domain in the interval 431–593; that stretch reads QIDDLLGEIQ…ITPTTINKKI (163 aa). The disordered stretch occupies residues 603–622; it reads NDETNEQQQTEVPKKMTKKE. Residues 624 to 659 form the UVR domain; the sequence is EKTIANIEKEMKQAAKDLDFEKATELRDMLFELKAE.

Belongs to the UvrB family. In terms of assembly, forms a heterotetramer with UvrA during the search for lesions. Interacts with UvrC in an incision complex.

It is found in the cytoplasm. Its function is as follows. The UvrABC repair system catalyzes the recognition and processing of DNA lesions. A damage recognition complex composed of 2 UvrA and 2 UvrB subunits scans DNA for abnormalities. Upon binding of the UvrA(2)B(2) complex to a putative damaged site, the DNA wraps around one UvrB monomer. DNA wrap is dependent on ATP binding by UvrB and probably causes local melting of the DNA helix, facilitating insertion of UvrB beta-hairpin between the DNA strands. Then UvrB probes one DNA strand for the presence of a lesion. If a lesion is found the UvrA subunits dissociate and the UvrB-DNA preincision complex is formed. This complex is subsequently bound by UvrC and the second UvrB is released. If no lesion is found, the DNA wraps around the other UvrB subunit that will check the other stand for damage. The chain is UvrABC system protein B from Staphylococcus saprophyticus subsp. saprophyticus (strain ATCC 15305 / DSM 20229 / NCIMB 8711 / NCTC 7292 / S-41).